Reading from the N-terminus, the 558-residue chain is Protein NRT1/ PTR FAMILY 2.7 (558 aa).

12 helical membrane-spanning segments follow: residues 31 to 51 (FMIA…LNLI), 63 to 83 (IAAA…PAVA), 90 to 110 (FFGT…GVAL), 140 to 162 (LGVL…FTLA), 178 to 198 (FFNW…TAIV), 204 to 224 (ISWT…FLVF), 319 to 339 (IIPL…QLSL), 357 to 377 (IPAG…IIVN), 399 to 419 (VGIG…VEAK), 440 to 460 (VLWL…HFPG), 479 to 499 (SITS…IDLI), and 518 to 538 (VYWI…VCSW).

The protein belongs to the major facilitator superfamily. Proton-dependent oligopeptide transporter (POT/PTR) (TC 2.A.17) family. In terms of tissue distribution, expressed in shoots and in the cortex of mature roots. Not expressed in root tip meristematic cells.

It localises to the cell membrane. Transporter involved in a passive nitrate efflux. Not competent for chloride transport. This chain is Protein NRT1/ PTR FAMILY 2.7 (NPF2.7), found in Arabidopsis thaliana (Mouse-ear cress).